A 595-amino-acid chain; its full sequence is MLLPWQQTIIILFLGVNSLVAALRNTYRTVEELPTIPEGWIQGKPPSPETSIRMNLALFQEKAHAFEQMVVDISTPGHSNYGKHLSRRTLKDFLRPRKEVSDSILSWLEEAGVAKKSILNDGDWIHFAISVSQAERMLKTRFHYYHDSGDPSVFMIRTLQYSVPSHLAPDIHMIQPTTKFGKPKKHGNSIAKLETIQLSSNATTNCNVTITPQCLRDIYKMGNSLATPDYRNVIGVSGYLDQYARYNDFYKFIDLYAPDLKGANFSVKYIGKGQNLQNSTKNSVEASLDIDYALGLSNATTVFYTTSGRGPLVPDLEQPDQEHNSNEPYLDQLHYLLSLPSDELPAILSTSYGENEQSVPEKFSNATCSLFAQLAARGVSVIFSSGDTGVGSSCLTNGRKKVSRFNPTFPASCPFVTSVGATFRINPEMAISFSSGGFSDRHIRPRFQDDAVLTYLDKLGNQWEGLYDPRGRGIPDVAAQGSNFAVYDHGRVGMVSGTSASAPAFAAIIANLNSIRLNANKPVLGYLNPFIYGQGRQGFTDIVHGGSRGCAGYNSTNGSAPAVPYASWNATEGWDPVTGVGTPNFEILAKIVRDL.

Positions 1–22 (MLLPWQQTIIILFLGVNSLVAA) are cleaved as a signal peptide. Positions 23–201 (LRNTYRTVEE…KLETIQLSSN (179 aa)) are cleaved as a propeptide — removed in mature form. N-linked (GlcNAc...) asparagine glycans are attached at residues asparagine 207, asparagine 264, and asparagine 278. In terms of domain architecture, Peptidase S53 spans 209–595 (TITPQCLRDI…EILAKIVRDL (387 aa)). Residues glutamate 285 and aspartate 289 each act as charge relay system in the active site. Asparagine 298 and asparagine 365 each carry an N-linked (GlcNAc...) asparagine glycan. Serine 499 serves as the catalytic Charge relay system. Residues aspartate 541 and isoleucine 542 each contribute to the Ca(2+) site. N-linked (GlcNAc...) asparagine glycosylation is found at asparagine 554, asparagine 557, and asparagine 569. Positions 573 and 575 each coordinate Ca(2+).

The cofactor is Ca(2+).

Its subcellular location is the secreted. The protein resides in the extracellular space. The enzyme catalyses Release of an N-terminal tripeptide from a polypeptide.. Functionally, secreted tripeptidyl-peptidase which degrades proteins at acidic pHs and is involved in virulence. The polypeptide is Tripeptidyl-peptidase SED3 (SED3) (Arthroderma otae (strain ATCC MYA-4605 / CBS 113480) (Microsporum canis)).